Here is a 264-residue protein sequence, read N- to C-terminus: Tritrans,polycis-undecaprenyl-diphosphate synthase (geranylgeranyl-diphosphate specific) (264 aa).

The active site involves Asp43. A Mg(2+)-binding site is contributed by Asp43. Substrate contacts are provided by residues Gly44–Arg47, Trp48, His60, and Ser88–Glu90. The active-site Proton acceptor is Asn91. Substrate contacts are provided by residues Phe92, Arg94, Arg213, and Arg219 to Ser221. Mg(2+) is bound at residue Glu232.

Belongs to the UPP synthase family. In terms of assembly, homodimer. Mg(2+) serves as cofactor.

The catalysed reaction is geranylgeranyl diphosphate + 7 isopentenyl diphosphate = tri-trans,hepta-cis-undecaprenyl diphosphate + 7 diphosphate. Functionally, catalyzes the sequential condensation of isopentenyl diphosphate (IPP) with geranylgeranyl diphosphate (GGPP) to yield (2Z,6Z,10Z,14Z,18Z,22Z,26Z,30E,34E,38E)-undecaprenyl diphosphate (tritrans,heptacis-UPP). It is probably the precursor of glycosyl carrier lipids. The sequence is that of Tritrans,polycis-undecaprenyl-diphosphate synthase (geranylgeranyl-diphosphate specific) from Pyrococcus furiosus (strain ATCC 43587 / DSM 3638 / JCM 8422 / Vc1).